We begin with the raw amino-acid sequence, 384 residues long: MTPISQTPGLLAEAMVDLGAIEHNVRVLREHAGHAQLMAVVKADGYGHGATRVAQTALGAGAAELGVATVDEALALRADGITAPVLAWLHPPGIDFGPALLADVQVAVSSLRQLDELLHAVRRTGRTATVTVKVDTGLNRNGVGPAQFPAMLTALRQAMAEDAVRLRGLMSHMVYADKPDDSINDVQAQRFTAFLAQAREQGVRFEVAHLSNSSATMARPDLTFDLVRPGIAVYGLSPVPALGDMGLVPAMTVKCAVALVKSIRAGEGVSYGHTWIAPRDTNLALLPIGYADGVFRSLGGRLEVLINGRRCPGVGRICMDQFMVDLGPGPLDVAEGDEAILFGPGIRGEPTAQDWADLVGTIHYEVVTSPRGRITRTYREAENR.

The active-site Proton acceptor; specific for D-alanine is Lys-42. An N6-(pyridoxal phosphate)lysine modification is found at Lys-42. Position 140 (Arg-140) interacts with substrate. Tyr-271 serves as the catalytic Proton acceptor; specific for L-alanine. Met-319 contacts substrate.

It belongs to the alanine racemase family. As to quaternary structure, homodimer. Pyridoxal 5'-phosphate is required as a cofactor.

The enzyme catalyses L-alanine = D-alanine. Its pathway is amino-acid biosynthesis; D-alanine biosynthesis; D-alanine from L-alanine: step 1/1. Its function is as follows. Catalyzes the interconversion of L-alanine and D-alanine. The chain is Alanine racemase (alr) from Mycobacterium tuberculosis (strain CDC 1551 / Oshkosh).